The primary structure comprises 497 residues: Serine/arginine-rich protein PSR (497 aa).

The first 19 residues, 1 to 19, serve as a signal peptide directing secretion; the sequence is MYSRCIALVFVGLLASSLA. At 20–366 the chain is on the extracellular side; that stretch reads ANCYGPAGKL…HHGLSSQKLG (347 aa). N-linked (GlcNAc...) asparagine glycans are attached at residues Asn-92, Asn-193, Asn-202, Asn-261, and Asn-283. Residues 367–387 form a helical membrane-spanning segment; it reads LAIGLPIAGVFLIILIAAAII. At 388-497 the chain is on the cytoplasmic side; sequence YYRKRRESEK…ESASRDSDSD (110 aa). The necessary for phosphorylation by PSRPK in vitro stretch occupies residues 424 to 450; it reads MGSKTMQAMLDMRDDDESEHDSDDGYG. Residues 436–447 show a composition bias toward acidic residues; it reads RDDDESEHDSDD. The interval 436–497 is disordered; the sequence is RDDDESEHDS…ESASRDSDSD (62 aa). A compositionally biased stretch (basic residues) spans 459–471; it reads GRSRSRSRSRSVS. The span at 476–497 shows a compositional bias: basic and acidic residues; that stretch reads GSRDARSESDPGESASRDSDSD.

Post-translationally, phosphorylated on serine residues in the RS domain by PSRPK.

The protein localises to the membrane. This is Serine/arginine-rich protein PSR from Physarum polycephalum (Slime mold).